The chain runs to 201 residues: NADH-quinone oxidoreductase subunit C (201 aa).

Belongs to the complex I 30 kDa subunit family. In terms of assembly, NDH-1 is composed of 14 different subunits. Subunits NuoB, C, D, E, F, and G constitute the peripheral sector of the complex.

It is found in the cell inner membrane. The catalysed reaction is a quinone + NADH + 5 H(+)(in) = a quinol + NAD(+) + 4 H(+)(out). Functionally, NDH-1 shuttles electrons from NADH, via FMN and iron-sulfur (Fe-S) centers, to quinones in the respiratory chain. The immediate electron acceptor for the enzyme in this species is believed to be ubiquinone. Couples the redox reaction to proton translocation (for every two electrons transferred, four hydrogen ions are translocated across the cytoplasmic membrane), and thus conserves the redox energy in a proton gradient. The chain is NADH-quinone oxidoreductase subunit C from Sinorhizobium medicae (strain WSM419) (Ensifer medicae).